Here is a 764-residue protein sequence, read N- to C-terminus: Myotubularin-related protein 10-B (764 aa).

Residues 208 to 649 (FESYSDWDRE…THIQIWKLCY (442 aa)) form the Myotubularin phosphatase domain.

Belongs to the protein-tyrosine phosphatase family. Non-receptor class myotubularin subfamily.

This Xenopus laevis (African clawed frog) protein is Myotubularin-related protein 10-B (mtmr10-b).